A 292-amino-acid chain; its full sequence is ATP synthase gamma chain (292 aa).

This sequence belongs to the ATPase gamma chain family. F-type ATPases have 2 components, CF(1) - the catalytic core - and CF(0) - the membrane proton channel. CF(1) has five subunits: alpha(3), beta(3), gamma(1), delta(1), epsilon(1). CF(0) has three main subunits: a, b and c.

The protein localises to the cell membrane. In terms of biological role, produces ATP from ADP in the presence of a proton gradient across the membrane. The gamma chain is believed to be important in regulating ATPase activity and the flow of protons through the CF(0) complex. The polypeptide is ATP synthase gamma chain (Caldicellulosiruptor saccharolyticus (strain ATCC 43494 / DSM 8903 / Tp8T 6331)).